Reading from the N-terminus, the 317-residue chain is 17-beta-hydroxysteroid dehydrogenase type 6 (317 aa).

A signal peptide spans 1 to 17 (MWLYLAVLLGLYYLLRW). 33-57 (FITGCDSGFGNQLARQLDLRGLRVL) is an NAD(+) binding site. Asparagine 71 and asparagine 161 each carry an N-linked (GlcNAc...) asparagine glycan. Residue serine 164 participates in substrate binding. Tyrosine 176 functions as the Proton acceptor in the catalytic mechanism.

It belongs to the short-chain dehydrogenases/reductases (SDR) family.

The protein localises to the microsome membrane. It localises to the endoplasmic reticulum membrane. It catalyses the reaction all-trans-retinol--[retinol-binding protein] + NAD(+) = all-trans-retinal--[retinol-binding protein] + NADH + H(+). It carries out the reaction all-trans-retinol + NAD(+) = all-trans-retinal + NADH + H(+). The catalysed reaction is androsterone + NAD(+) = 5alpha-androstan-3,17-dione + NADH + H(+). The enzyme catalyses testosterone + NAD(+) = androst-4-ene-3,17-dione + NADH + H(+). It catalyses the reaction 5alpha-androstane-3alpha,17beta-diol + NAD(+) = 17beta-hydroxy-5alpha-androstan-3-one + NADH + H(+). It carries out the reaction 17beta-estradiol + NAD(+) = estrone + NADH + H(+). The catalysed reaction is 17beta-estradiol + NADP(+) = estrone + NADPH + H(+). The enzyme catalyses 3alpha-hydroxy-5alpha-pregnan-20-one + NAD(+) = 5alpha-pregnane-3,20-dione + NADH + H(+). It catalyses the reaction 5alpha-androstane-3beta,17beta-diol + NAD(+) = 17beta-hydroxy-5alpha-androstan-3-one + NADH + H(+). It carries out the reaction 3beta-hydroxy-5alpha-androstan-17-one + NAD(+) = 5alpha-androstan-3,17-dione + NADH + H(+). NAD-dependent oxidoreductase with broad substrate specificity that shows both oxidative and reductive activity (in vitro). Has 17-beta-hydroxysteroid dehydrogenase activity towards various steroids (in vitro). Converts 5-alpha-androstan-3-alpha,17-beta-diol to androsterone and estradiol to estrone (in vitro). Has 3-alpha-hydroxysteroid dehydrogenase activity towards androsterone (in vitro). Has retinol dehydrogenase activity towards all-trans-retinol (in vitro). Can convert androsterone to epi-androsterone. Androsterone is first oxidized to 5-alpha-androstane-3,17-dione and then reduced to epi-andosterone. Can act on both C-19 and C-21 3-alpha-hydroxysteroids. The protein is 17-beta-hydroxysteroid dehydrogenase type 6 (HSD17B6) of Bos taurus (Bovine).